The following is a 233-amino-acid chain: MLTYDNWEEPTITFPEDDPYKGALSVLKWAYGHYGDQLVYACSFGIEGIVLIDLIYKVKKDAEIVFLDTGLHFKETYETIERVKERYPGLNIILKKPDLTLEEQAEEHGDKLWEREPNQCCYLRKVVPLREALSGHPAWLSGLRRDQGPSRANTNFLNKDEKFKSVKVCPLIHWTWKDIWRYTSRNELDYNPLHDQGYPSIGCAPCTSPAFTAEDLRSGRWNGMAKTECGLHE.

Cys120, Cys121, Cys203, and Cys206 together coordinate [4Fe-4S] cluster. Cys229 serves as the catalytic Nucleophile; cysteine thiosulfonate intermediate.

Belongs to the PAPS reductase family. CysH subfamily. [4Fe-4S] cluster is required as a cofactor.

It is found in the cytoplasm. It carries out the reaction [thioredoxin]-disulfide + sulfite + AMP + 2 H(+) = adenosine 5'-phosphosulfate + [thioredoxin]-dithiol. It participates in sulfur metabolism; hydrogen sulfide biosynthesis; sulfite from sulfate. Catalyzes the formation of sulfite from adenosine 5'-phosphosulfate (APS) using thioredoxin as an electron donor. The protein is Adenosine 5'-phosphosulfate reductase 1 (cysH) of Bacillus subtilis (strain 168).